Reading from the N-terminus, the 158-residue chain is NAD(P)H-quinone oxidoreductase subunit J, chloroplastic (158 aa).

The protein belongs to the complex I 30 kDa subunit family. NDH is composed of at least 16 different subunits, 5 of which are encoded in the nucleus.

The protein localises to the plastid. The protein resides in the chloroplast thylakoid membrane. It catalyses the reaction a plastoquinone + NADH + (n+1) H(+)(in) = a plastoquinol + NAD(+) + n H(+)(out). The enzyme catalyses a plastoquinone + NADPH + (n+1) H(+)(in) = a plastoquinol + NADP(+) + n H(+)(out). In terms of biological role, NDH shuttles electrons from NAD(P)H:plastoquinone, via FMN and iron-sulfur (Fe-S) centers, to quinones in the photosynthetic chain and possibly in a chloroplast respiratory chain. The immediate electron acceptor for the enzyme in this species is believed to be plastoquinone. Couples the redox reaction to proton translocation, and thus conserves the redox energy in a proton gradient. The protein is NAD(P)H-quinone oxidoreductase subunit J, chloroplastic of Buxus microphylla (Littleleaf boxwood).